The sequence spans 75 residues: MLIPYDALEVDTLTRLIEDFVTRDGTDNGDDTPLETRVLRVRQALTKGQALIVFDPESEQCQLMLKHDVPKHLFD.

This sequence belongs to the UPF0270 family.

The polypeptide is UPF0270 protein Pfl01_4103 (Pseudomonas fluorescens (strain Pf0-1)).